The sequence spans 205 residues: Ribosomal RNA small subunit methyltransferase G (205 aa).

Residues Gly-66, Phe-71, 119–120 (IE), and Arg-135 contribute to the S-adenosyl-L-methionine site.

The protein belongs to the methyltransferase superfamily. RNA methyltransferase RsmG family.

It is found in the cytoplasm. The catalysed reaction is guanosine(527) in 16S rRNA + S-adenosyl-L-methionine = N(7)-methylguanosine(527) in 16S rRNA + S-adenosyl-L-homocysteine. In terms of biological role, specifically methylates the N7 position of guanine in position 527 of 16S rRNA. The sequence is that of Ribosomal RNA small subunit methyltransferase G from Rhizobium rhizogenes (strain K84 / ATCC BAA-868) (Agrobacterium radiobacter).